Reading from the N-terminus, the 971-residue chain is UPF0182 protein CMS1887 (971 aa).

7 helical membrane-spanning segments follow: residues 16–36, 56–76, 108–128, 161–181, 205–225, 255–275, and 281–301; these read LAITAAIIAALVIAFFIFAGF, WGAGIALFFIGFLAMAIPVFV, LAMFAIPAVFGLFAGVSASSG, FYHAVVGFASAVVIISMLGVL, IQIAITAGVYFLLQGVSIWLD, TILAGIAVVVAVMFIITAAIG, and IIGTAGLIVASILIGTAYPAI. Residues 687–702 are compositionally biased toward polar residues; sequence QDLWTTPNDPTATTEA. Disordered regions lie at residues 687–706 and 874–924; these read QDLWTTPNDPTATTEAGTPA and GATA…AQDV. Composition is skewed to low complexity over residues 884–900 and 907–921; these read PTTPADGAAGDGSTDGA and STPTPAPTASPAAPA.

It belongs to the UPF0182 family.

It localises to the cell membrane. The protein is UPF0182 protein CMS1887 of Clavibacter sepedonicus (Clavibacter michiganensis subsp. sepedonicus).